The sequence spans 286 residues: Protoheme IX farnesyltransferase (286 aa).

The next 8 helical transmembrane spans lie at 14 to 31, 38 to 58, 94 to 114, 135 to 155, 165 to 185, 207 to 227, 228 to 248, and 262 to 282; these read FRLTSTVAFSSGMGYILA, WLNLVLFLIGGFSITVSANII, LFLIAGTVILAVYSTLNALIL, IAVFIGAFPGAFPPMIGWIAV, VLFAIQFLWQFPHFWAIAWVL, TATIIMTYTLCLLPLGFLPYL, FGMSGITSAYIALACGILFFF, and ALLLMFGSFLYLPIVQIAFVL.

This sequence belongs to the UbiA prenyltransferase family. Protoheme IX farnesyltransferase subfamily.

It is found in the cell inner membrane. The catalysed reaction is heme b + (2E,6E)-farnesyl diphosphate + H2O = Fe(II)-heme o + diphosphate. It functions in the pathway porphyrin-containing compound metabolism; heme O biosynthesis; heme O from protoheme: step 1/1. Converts heme B (protoheme IX) to heme O by substitution of the vinyl group on carbon 2 of heme B porphyrin ring with a hydroxyethyl farnesyl side group. The chain is Protoheme IX farnesyltransferase from Cytophaga hutchinsonii (strain ATCC 33406 / DSM 1761 / CIP 103989 / NBRC 15051 / NCIMB 9469 / D465).